Here is a 376-residue protein sequence, read N- to C-terminus: Anhydro-N-acetylmuramic acid kinase (376 aa).

22–29 serves as a coordination point for ATP; it reads GTSMDGAD.

Belongs to the anhydro-N-acetylmuramic acid kinase family.

It catalyses the reaction 1,6-anhydro-N-acetyl-beta-muramate + ATP + H2O = N-acetyl-D-muramate 6-phosphate + ADP + H(+). The protein operates within amino-sugar metabolism; 1,6-anhydro-N-acetylmuramate degradation. It participates in cell wall biogenesis; peptidoglycan recycling. Functionally, catalyzes the specific phosphorylation of 1,6-anhydro-N-acetylmuramic acid (anhMurNAc) with the simultaneous cleavage of the 1,6-anhydro ring, generating MurNAc-6-P. Is required for the utilization of anhMurNAc either imported from the medium or derived from its own cell wall murein, and thus plays a role in cell wall recycling. The protein is Anhydro-N-acetylmuramic acid kinase of Neisseria gonorrhoeae (strain NCCP11945).